Here is a 326-residue protein sequence, read N- to C-terminus: Flotillin-like protein FloA (326 aa).

A helical transmembrane segment spans residues 3–23 (FTTIVVILLVIACIVVLFFIG).

This sequence belongs to the flotillin-like FloA family. In terms of assembly, homooligomerizes.

It localises to the cell membrane. Its subcellular location is the membrane raft. Its function is as follows. Found in functional membrane microdomains (FMM) that may be equivalent to eukaryotic membrane rafts. FMMs are highly dynamic and increase in number as cells age. Flotillins are thought to be important factors in membrane fluidity. In Desulforapulum autotrophicum (strain ATCC 43914 / DSM 3382 / VKM B-1955 / HRM2) (Desulfobacterium autotrophicum), this protein is Flotillin-like protein FloA.